A 159-amino-acid chain; its full sequence is Putative viral CXC chemokine 2 (159 aa).

Disulfide bonds link Cys-50–Cys-77 and Cys-52–Cys-93.

Belongs to the intercrine alpha (chemokine CxC) family.

The polypeptide is Putative viral CXC chemokine 2 (UL147) (Human cytomegalovirus (strain Towne) (HHV-5)).